Here is a 321-residue protein sequence, read N- to C-terminus: Probable heme-iron transport system permease protein IsdF (321 aa).

A run of 9 helical transmembrane segments spans residues 9–29, 61–81, 89–109, 114–134, 143–163, 179–199, 233–253, 267–287, and 294–314; these read LLFL…FVTG, ILIA…LQAA, ANII…MLFI, FYLP…IILL, VSMI…LEIL, IWSD…LTLL, VFLA…GIIV, LIPF…LLGR, and EIPA…YLIC.

It belongs to the binding-protein-dependent transport system permease family. FecCD subfamily.

The protein resides in the cell membrane. Its function is as follows. Part of the binding-protein-dependent transport system for heme-iron. Responsible for the translocation of the substrate across the membrane. This is Probable heme-iron transport system permease protein IsdF (isdF) from Staphylococcus aureus (strain NCTC 8325 / PS 47).